The sequence spans 490 residues: Pre-glycoprotein polyprotein GP complex (490 aa).

Residue glycine 2 is the site of N-myristoyl glycine; by host attachment. Residues 2–17 (GQIVTFFQEVPHVIEE) lie on the Extracellular side of the membrane. A helical membrane pass occupies residues 18–33 (VMNIVLIALSILAILK). Residues 34–58 (GLYNVATCGLIGLVTFLLLSGRSCS) are Cytoplasmic-facing. Position 57 (cysteine 57) interacts with Zn(2+). At 59–431 (LIYKGTYELQ…QGKTPLGLVD (373 aa)) the chain is on the extracellular side. 6 N-linked (GlcNAc...) asparagine; by host glycosylation sites follow: asparagine 78, asparagine 88, asparagine 98, asparagine 108, asparagine 118, and asparagine 166. Disulfide bonds link cysteine 85–cysteine 230, cysteine 117–cysteine 154, cysteine 179–cysteine 211, cysteine 278–cysteine 291, cysteine 300–cysteine 309, and cysteine 363–cysteine 384. A glycan (N-linked (GlcNAc...) asparagine; by host) is linked at asparagine 223. Residues asparagine 364, asparagine 372, asparagine 389, and asparagine 394 are each glycosylated (N-linked (GlcNAc...) asparagine; by host). The helical transmembrane segment at 432-452 (LFVFSTSFYLISIFLHLVKIP) threads the bilayer. Residues 453 to 490 (THRHIVGKPCPKPHRLNHMGICSCGLYKQPGVPVRWKR) are Cytoplasmic-facing. Positions 454, 456, 462, 466, 474, and 476 each coordinate Zn(2+).

The protein belongs to the arenaviridae GPC protein family. Interacts with glycoprotein G2. Part of the GP complex (GP-C) together with glycoprotein G1 and glycoprotein G2. The GP-complex interacts with protein Z, which interacts with ribonucleocapsid; these interactions may induce virion budding. As to quaternary structure, homotrimer; disulfide-linked. In pre-fusion state, G1 homotrimers bind G2 homotrimers via ionic interactions. Part of the GP complex (GP-C) together with glycoprotein G2 and the stable signal peptide. Interacts with the primary host receptor DAG1 on the cell surface; this interaction occurs at pH 8.0 but not at pH 6.0 and below. Upon virus internalization and at endosomal pH, interacts with the host lysosomal protein LAMP1; this interaction mediates G1 dissociation from GP-C and membrane fusion. The GP-complex interacts with protein Z, which interacts with ribonucleocapsid; these interactions may induce virion budding. In terms of assembly, homotrimer. Interacts with the stable signal peptide. In pre-fusion state, G2 homotrimers bind G1 homotrimers via ionic interactions. Part of the GP complex (GP-C) together with glycoprotein G1 and the stable signal peptide. Acidification in the endosome triggers rearrangements, which ultimately leads to a 6 helix bundle formed by the two heptad repeat domains (HR1 and HR2) in post-fusion state. The GP-complex interacts with protein Z, which interacts with ribonucleocapsid; these interactions may induce virion budding. In terms of processing, specific enzymatic cleavages in vivo yield mature proteins. GP-C polyprotein is cleaved in the endoplasmic reticulum by the host protease MBTPS1. Only cleaved glycoprotein is incorporated into virions. The SSP remains stably associated with the GP complex following cleavage by signal peptidase and plays crucial roles in the trafficking of GP through the secretory pathway. Post-translationally, myristoylation is necessary for GP2-mediated fusion activity.

It localises to the virion membrane. The protein resides in the host endoplasmic reticulum membrane. Its subcellular location is the host Golgi apparatus membrane. The protein localises to the host cell membrane. Its function is as follows. Functions as a cleaved signal peptide that is retained as the third component of the GP complex (GP-C). Helps to stabilize the spike complex in its native conformation. The SSP is required for efficient glycoprotein expression, post-translational maturation cleavage of G1 and G2, glycoprotein transport to the cell surface plasma membrane, formation of infectious virus particles, and acid pH-dependent glycoprotein-mediated cell fusion. In terms of biological role, forms the virion spikes together with glycoprotein G2. The glycoprotein spike trimers are connected to the underlying matrix. Interacts with the host receptor. Mediates virus attachment to the host primary receptor alpha-dystroglycan DAG1 (alpha-DG) at the cell surface. This attachment induces virion internalization apparently through macropinocytosis. Following endocytosis, there is a pH-dependent switch from binding DAG1 to the host lysosomal receptor LAMP1. This latter binding triggers the dissociation of GP1, exposing the fusion subunit, GP2, such that fusion can occur. Down-modulates host DAG1. Forms the virion spikes together with glycoprotein G1. The glycoprotein spike trimers are connected to the underlying matrix. Class I viral fusion protein that directs fusion of viral and host endosomal membranes, leading to delivery of the nucleocapsid into the cytoplasm. Membrane fusion is mediated by irreversible conformational changes induced by acidification. This Lassa virus (strain GA391) (LASV) protein is Pre-glycoprotein polyprotein GP complex.